A 235-amino-acid polypeptide reads, in one-letter code: Phosphoribosylaminoimidazole-succinocarboxamide synthase (235 aa).

This sequence belongs to the SAICAR synthetase family.

The catalysed reaction is 5-amino-1-(5-phospho-D-ribosyl)imidazole-4-carboxylate + L-aspartate + ATP = (2S)-2-[5-amino-1-(5-phospho-beta-D-ribosyl)imidazole-4-carboxamido]succinate + ADP + phosphate + 2 H(+). It participates in purine metabolism; IMP biosynthesis via de novo pathway; 5-amino-1-(5-phospho-D-ribosyl)imidazole-4-carboxamide from 5-amino-1-(5-phospho-D-ribosyl)imidazole-4-carboxylate: step 1/2. The chain is Phosphoribosylaminoimidazole-succinocarboxamide synthase from Streptococcus sanguinis (strain SK36).